A 479-amino-acid polypeptide reads, in one-letter code: Cyclin-dependent kinase F-1 (479 aa).

In terms of domain architecture, Protein kinase spans 21–418; that stretch reads YEIFERVGSG…TMEMLNDKYL (398 aa). ATP is bound by residues 27–35 and Lys50; that span reads VGSGAYADV. Phosphotyrosine is present on Tyr32. Asp146 acts as the Proton acceptor in catalysis. Phosphoserine is present on residues Ser179, Ser208, and Ser247. Residues 187–221 form a disordered region; it reads KLEDKDGETSEPPEVIPDYENSPRQGSDGQEREAM. Thr290 bears the Phosphothreonine mark. Positions 434-479 are disordered; the sequence is PTMSGPDEDSPRKWNDYREMDSDSDFDGFGPMNVKPTSSGFTIEFP. A compositionally biased stretch (basic and acidic residues) spans 442-454; it reads DSPRKWNDYREMD. A compositionally biased stretch (polar residues) spans 468–479; the sequence is KPTSSGFTIEFP.

It belongs to the protein kinase superfamily. CMGC Ser/Thr protein kinase family. CDC2/CDKX subfamily. In terms of tissue distribution, highly expressed in suspension cell culture. Expressed at low levels in all plant organs.

It carries out the reaction L-seryl-[protein] + ATP = O-phospho-L-seryl-[protein] + ADP + H(+). It catalyses the reaction L-threonyl-[protein] + ATP = O-phospho-L-threonyl-[protein] + ADP + H(+). The catalysed reaction is [DNA-directed RNA polymerase] + ATP = phospho-[DNA-directed RNA polymerase] + ADP + H(+). In terms of biological role, CDK-activating kinase that modulates CDKD-2 and CDKD-3 activities by phosphorylation of the T-loop. Activates CDKD-2 C-terminal domain (CTD) kinase activity. Activates CDKA-1 probably by phosphorylation. Possesses a CDK kinase activity independently of association with cyclin CYCH1-1. Phosphorylates the CTD of the large subunit of RNA polymerase II. The protein is Cyclin-dependent kinase F-1 (CDKF-1) of Arabidopsis thaliana (Mouse-ear cress).